We begin with the raw amino-acid sequence, 153 residues long: Cofilin (153 aa).

In terms of domain architecture, ADF-H spans 15–147 (GVAVNDSALQ…AYESVLERVS (133 aa)).

This sequence belongs to the actin-binding proteins ADF family.

The protein resides in the cytoplasm. The protein localises to the cytoskeleton. It is found in the nucleus matrix. Controls reversibly actin polymerization and depolymerization in a pH-sensitive manner. It has the ability to bind G- and F-actin in a 1:1 ratio of cofilin to actin. Binding to F-actin is regulated by tropomyosin. It is the major component of intranuclear and cytoplasmic actin rods. Required for accumulation of actin at the cell division site via depolymerizing actin at the cell ends. In association with myosin II has a role in the assembly of the contractile ring via severing actin filaments. Involved in the maintenance of the contractile ring once formed. In association with profilin and capping protein, has a role in the mitotic reorganization of the actin cytoskeleton. The protein is Cofilin (COF1) of Yarrowia lipolytica (strain CLIB 122 / E 150) (Yeast).